A 553-amino-acid chain; its full sequence is Copine-9 (553 aa).

C2 domains lie at 1 to 125 (MSLS…ERPL) and 132 to 255 (KCGT…FTVY). Residues Asp163, Asp169, Asp225, Asp227, and Asp233 each coordinate Ca(2+). In terms of domain architecture, VWFA spans 299–500 (NFTVAIDFTA…VQFVPFRDYV (202 aa)). Residues 531 to 553 (TRDIQPRPPPPVSPNPTPAPEQP) are disordered. Residues 536 to 553 (PRPPPPVSPNPTPAPEQP) show a composition bias toward pro residues.

This sequence belongs to the copine family. Ca(2+) serves as cofactor.

In terms of biological role, probable calcium-dependent phospholipid-binding protein that may play a role in calcium-mediated intracellular processes. Plays a role in dendrite formation by melanocytes. In Mus musculus (Mouse), this protein is Copine-9.